A 141-amino-acid polypeptide reads, in one-letter code: uncharacterized protein (141 aa).

This is an uncharacterized protein from Homo sapiens (Human).